Reading from the N-terminus, the 284-residue chain is Diaminopimelate epimerase (284 aa).

N14 and N67 together coordinate substrate. The active-site Proton donor is the C76. Substrate-binding positions include 77-78 (GN), N166, N199, and 217-218 (ER). Catalysis depends on C226, which acts as the Proton acceptor. Position 227-228 (227-228 (GT)) interacts with substrate.

The protein belongs to the diaminopimelate epimerase family. In terms of assembly, homodimer.

The protein localises to the cytoplasm. It carries out the reaction (2S,6S)-2,6-diaminopimelate = meso-2,6-diaminopimelate. It functions in the pathway amino-acid biosynthesis; L-lysine biosynthesis via DAP pathway; DL-2,6-diaminopimelate from LL-2,6-diaminopimelate: step 1/1. Catalyzes the stereoinversion of LL-2,6-diaminopimelate (L,L-DAP) to meso-diaminopimelate (meso-DAP), a precursor of L-lysine and an essential component of the bacterial peptidoglycan. The protein is Diaminopimelate epimerase of Bacillus pumilus (strain SAFR-032).